Consider the following 132-residue polypeptide: MRSLVVCLLLAACALECTARLQNVTVKGVAVCNKKRLANVEVQLYEKDTLDPDDLLDTKKTDAEGEFSVYGEEDETHAIAPYLLITHSCNPSKPNCVRIGRYLVPEDKIGGTYDMTYVTLDIKVHGEKEKCQ.

The first 19 residues, 1–19 (MRSLVVCLLLAACALECTA), serve as a signal peptide directing secretion. Asn-23 carries N-linked (GlcNAc...) asparagine glycosylation.

This sequence belongs to the nematode transthyretin-like family.

The protein localises to the secreted. The sequence is that of Transthyretin-like protein 16 (ttr-16) from Caenorhabditis elegans.